The sequence spans 225 residues: Small ribosomal subunit protein uS2 (225 aa).

The span at Met1 to Ala13 shows a compositional bias: basic and acidic residues. Residues Met1–Gly33 are disordered.

This sequence belongs to the universal ribosomal protein uS2 family.

The chain is Small ribosomal subunit protein uS2 from Methanosarcina acetivorans (strain ATCC 35395 / DSM 2834 / JCM 12185 / C2A).